Consider the following 194-residue polypeptide: Holliday junction branch migration complex subunit RuvA (194 aa).

Residues 1-61 are domain I; the sequence is MYDFLTGIIK…DNQISLYGFK (61 aa). The interval 62-139 is domain II; sequence TVKERNLFQK…GDFSKNIAPM (78 aa). Residues 139 to 143 form a flexible linker region; it reads MKNLL. Positions 144–194 are domain III; the sequence is ENSAELDDALAALVALGFSSKEVNKINPKLASLGELTTDAYIQKGLKLLTK.

This sequence belongs to the RuvA family. Homotetramer. Forms an RuvA(8)-RuvB(12)-Holliday junction (HJ) complex. HJ DNA is sandwiched between 2 RuvA tetramers; dsDNA enters through RuvA and exits via RuvB. An RuvB hexamer assembles on each DNA strand where it exits the tetramer. Each RuvB hexamer is contacted by two RuvA subunits (via domain III) on 2 adjacent RuvB subunits; this complex drives branch migration. In the full resolvosome a probable DNA-RuvA(4)-RuvB(12)-RuvC(2) complex forms which resolves the HJ.

The protein resides in the cytoplasm. The RuvA-RuvB-RuvC complex processes Holliday junction (HJ) DNA during genetic recombination and DNA repair, while the RuvA-RuvB complex plays an important role in the rescue of blocked DNA replication forks via replication fork reversal (RFR). RuvA specifically binds to HJ cruciform DNA, conferring on it an open structure. The RuvB hexamer acts as an ATP-dependent pump, pulling dsDNA into and through the RuvAB complex. HJ branch migration allows RuvC to scan DNA until it finds its consensus sequence, where it cleaves and resolves the cruciform DNA. The polypeptide is Holliday junction branch migration complex subunit RuvA (Oenococcus oeni (strain ATCC BAA-331 / PSU-1)).